We begin with the raw amino-acid sequence, 172 residues long: Centrin-2 (172 aa).

The segment at 1-31 is disordered; that stretch reads MASNFKKANMASTTQRKRMSPKPELTEEQKQ. At alanine 2 the chain carries N-acetylalanine. Residues 2–25 are required for self-assembly; the sequence is ASNFKKANMASTTQRKRMSPKPEL. Position 20 is a phosphoserine (serine 20). Lysine 22 participates in a covalent cross-link: Glycyl lysine isopeptide (Lys-Gly) (interchain with G-Cter in SUMO2). Threonine 26 carries the phosphothreonine modification. EF-hand domains are found at residues 28–63, 64–99, 101–136, and 137–172; these read EQKQEIREAFDLFDADGTGTIDVKELKVAMRALGFE, PKKEEIKKMISEIDKEGTGKMNFSDFLTVMTQKMSE, DTKEEILKAFKLFDDDETGKISFKNLKRVAKELGEN, and LSDEELQEMIDEADRDGDGEVNEQEFLRIMKKTSLY. Residues aspartate 41, aspartate 43, threonine 45, threonine 47, and glutamate 52 each coordinate Ca(2+). Aspartate 150, aspartate 152, aspartate 154, glutamate 156, and glutamate 161 together coordinate Ca(2+).

This sequence belongs to the centrin family. In terms of assembly, monomer. Homooligomer. Interacts with CCP110, SFI1. Component of the XPC complex composed of XPC, RAD23B and CETN2. Component of the nuclear pore complex (NPC)-associated TREX-2 complex (transcription and export complex 2), composed of at least GANP, 2 copies of ENY2, PCID2, SEM1/DSS1, and either centrin CETN2 or centrin CETN3. The TREX-2 complex also associates with ALYREF/ALY and with the nucleoporin NUP153. Interacts with USP49. Forms a microtubule-associated complex with POC5, POC1B and FAM161A. Interacts with CCDC15.

Its subcellular location is the cytoplasm. It is found in the cytoskeleton. It localises to the microtubule organizing center. The protein resides in the centrosome. The protein localises to the centriole. Its subcellular location is the nucleus. It is found in the nucleus envelope. It localises to the nuclear pore complex. Plays a fundamental role in microtubule organizing center structure and function. Required for centriole duplication and correct spindle formation. Has a role in regulating cytokinesis and genome stability via cooperation with CALM1 and CCP110. In terms of biological role, involved in global genome nucleotide excision repair (GG-NER) by acting as component of the XPC complex. Cooperatively with RAD23B appears to stabilize XPC. In vitro, stimulates DNA binding of the XPC:RAD23B dimer. Functionally, the XPC complex is proposed to represent the first factor bound at the sites of DNA damage and together with other core recognition factors, XPA, RPA and the TFIIH complex, is part of the pre-incision (or initial recognition) complex. The XPC complex recognizes a wide spectrum of damaged DNA characterized by distortions of the DNA helix such as single-stranded loops, mismatched bubbles or single-stranded overhangs. The orientation of XPC complex binding appears to be crucial for inducing a productive NER. XPC complex is proposed to recognize and to interact with unpaired bases on the undamaged DNA strand which is followed by recruitment of the TFIIH complex and subsequent scanning for lesions in the opposite strand in a 5'-to-3' direction by the NER machinery. Cyclobutane pyrimidine dimers (CPDs) which are formed upon UV-induced DNA damage esacpe detection by the XPC complex due to a low degree of structural perurbation. Instead they are detected by the UV-DDB complex which in turn recruits and cooperates with the XPC complex in the respective DNA repair. Its function is as follows. As a component of the TREX-2 complex, involved in the export of mRNAs to the cytoplasm through the nuclear pores. This is Centrin-2 (CETN2) from Bos taurus (Bovine).